The sequence spans 696 residues: DNA-directed RNA polymerase subunit beta' (696 aa).

Positions 69, 71, 87, and 90 each coordinate Zn(2+). Residues Asp-504, Asp-506, and Asp-508 each contribute to the Mg(2+) site.

The protein belongs to the RNA polymerase beta' chain family. RpoC1 subfamily. In plastids the minimal PEP RNA polymerase catalytic core is composed of four subunits: alpha, beta, beta', and beta''. When a (nuclear-encoded) sigma factor is associated with the core the holoenzyme is formed, which can initiate transcription. Requires Mg(2+) as cofactor. The cofactor is Zn(2+).

Its subcellular location is the plastid. It localises to the chloroplast. The catalysed reaction is RNA(n) + a ribonucleoside 5'-triphosphate = RNA(n+1) + diphosphate. DNA-dependent RNA polymerase catalyzes the transcription of DNA into RNA using the four ribonucleoside triphosphates as substrates. In Pinus thunbergii (Japanese black pine), this protein is DNA-directed RNA polymerase subunit beta'.